A 508-amino-acid chain; its full sequence is tRNA-2-methylthio-N(6)-dimethylallyladenosine synthase (508 aa).

Residues 13-131 (KTYEVRTYGC…LPVLLERARV (119 aa)) form the MTTase N-terminal domain. The [4Fe-4S] cluster site is built by cysteine 22, cysteine 60, cysteine 94, cysteine 168, cysteine 172, and cysteine 175. The region spanning 154 to 385 (RESAYAAWVS…ALQEEISWDE (232 aa)) is the Radical SAM core domain. In terms of domain architecture, TRAM spans 387 to 455 (KKQVGRTLEL…PHHLLAEGPV (69 aa)).

This sequence belongs to the methylthiotransferase family. MiaB subfamily. As to quaternary structure, monomer. It depends on [4Fe-4S] cluster as a cofactor.

It is found in the cytoplasm. It catalyses the reaction N(6)-dimethylallyladenosine(37) in tRNA + (sulfur carrier)-SH + AH2 + 2 S-adenosyl-L-methionine = 2-methylsulfanyl-N(6)-dimethylallyladenosine(37) in tRNA + (sulfur carrier)-H + 5'-deoxyadenosine + L-methionine + A + S-adenosyl-L-homocysteine + 2 H(+). Catalyzes the methylthiolation of N6-(dimethylallyl)adenosine (i(6)A), leading to the formation of 2-methylthio-N6-(dimethylallyl)adenosine (ms(2)i(6)A) at position 37 in tRNAs that read codons beginning with uridine. The protein is tRNA-2-methylthio-N(6)-dimethylallyladenosine synthase of Streptomyces avermitilis (strain ATCC 31267 / DSM 46492 / JCM 5070 / NBRC 14893 / NCIMB 12804 / NRRL 8165 / MA-4680).